Here is a 313-residue protein sequence, read N- to C-terminus: Glutaminase (313 aa).

The substrate site is built by Ser-64, Asn-116, Glu-163, Asn-170, Tyr-194, Tyr-246, and Val-264.

Belongs to the glutaminase family. As to quaternary structure, homotetramer.

It catalyses the reaction L-glutamine + H2O = L-glutamate + NH4(+). This chain is Glutaminase, found in Exiguobacterium sp. (strain ATCC BAA-1283 / AT1b).